Reading from the N-terminus, the 249-residue chain is Elsinochromes biosynthesis cluster protein HP3 (249 aa).

Residue asparagine 106 is glycosylated (N-linked (GlcNAc...) asparagine). The helical transmembrane segment at 138–158 threads the bilayer; it reads VVFAFMLSAWLVWLITVYAFA.

The protein localises to the membrane. Its function is as follows. Part of the gene cluster that mediates the biosynthesis of elsinochromes, pigments consisting of at least four interconvertible tautomers (A, B, C and D) that have a core phenolic quinone to which various side chains are attached and which play an important role in fungal pathogenesis. The non-reducing polyketide synthase PKS1 was proposed to iteratively catalyze decarboxylation between acetyl-CoA and malonyl-CoA subunits for polyketide chain elongation. The released polyketide undergoes cyclization to form an aromatic ring, and proceeds via serial modification steps to produce the heptaketide back- bone of elsinochrome. As elsinochrome has a symmetrical structure, two identical heptaketides are fused to form a core 1,2-dihydrobenzo-perylene ring structure, which can then be successively modified to produce the various derivatives of elsinochrome. Some of these reactions may be cooperatively carried out, at least in part, by the products of RDT1, OXR1 and PKS1. PRF1, embedded within the elsinochrome cluster possibly functions to stabilize some of the biosynthetic enzymes required for elsinochrome production. As prefoldin is a hexamer containing 2 a and 4 b subunits, additional prefoldin subunits, whose coding genes may not immediately link to the elsinochrome biosynthetic gene cluster, are required to fulfill the chaperone function. In addition, no methyltransferase-coding gene exists within the biosynthetic gene cluster, even though elsinochrome has four methyl groups at positions C3, C7, C8 and C12. Apparently, the identified gene cluster does not contain the entire entourage of genes responsible for elsinochrome biosynthesis. Once elsinochrome is synthesized, it must be exported outside the fungal cells, which is probably accomplished by the ECT1 transporter, to avoid toxicity. In Elsinoe fawcettii (Citrus scab fungus), this protein is Elsinochromes biosynthesis cluster protein HP3.